The sequence spans 557 residues: Potassium-transporting ATPase potassium-binding subunit (557 aa).

Helical transmembrane passes span 4–24 (LGAGLLQAGLLLLLLAAVHVP), 61–81 (TYALSVLGFSTVSILFLYAFL), 131–151 (GLTVQNFLSAAVGLAVAVALV), 174–194 (LRVLLPLAFAGAVLLLLTGVV), 253–273 (LEVFLILVIPFSLPRAFGTLV), 280–300 (LAVLSVMGTIFGASLALTTWA), 375–395 (GLYGMLVLAVITVFVAGLMVG), 412–432 (CAALYVLVTPAVLLTGTAVAL), 483–503 (LAIWLGRFLPMVLVLALAGAF), and 528–548 (LAVVVVVSALTFFPALALGPI).

Belongs to the KdpA family. As to quaternary structure, the system is composed of three essential subunits: KdpA, KdpB and KdpC.

Its subcellular location is the cell membrane. Functionally, part of the high-affinity ATP-driven potassium transport (or Kdp) system, which catalyzes the hydrolysis of ATP coupled with the electrogenic transport of potassium into the cytoplasm. This subunit binds the extracellular potassium ions and delivers the ions to the membrane domain of KdpB through an intramembrane tunnel. The polypeptide is Potassium-transporting ATPase potassium-binding subunit (Kineococcus radiotolerans (strain ATCC BAA-149 / DSM 14245 / SRS30216)).